The following is a 695-amino-acid chain: Frizzled and smoothened-like protein O (695 aa).

The N-terminal stretch at 1-23 (MKKLNYLLIVSFIFILNLLISKS) is a signal peptide. The Extracellular segment spans residues 24 to 233 (QVLIDVTAKC…KEYKTKFYSE (210 aa)). An FZ domain is found at 28-173 (DVTAKCELID…ANEEIQCSGP (146 aa)). Disulfide bonds link Cys33–Cys96, Cys42–Cys89, Cys80–Cys125, Cys114–Cys170, and Cys118–Cys138. The N-linked (GlcNAc...) asparagine glycan is linked to Asn47. Residues Asn137 and Asn178 are each glycosylated (N-linked (GlcNAc...) asparagine). Residues 234-254 (AILFSFSTACSFYLIFTFGVF) traverse the membrane as a helical segment. At 255–262 (PNKYTNRN) the chain is on the cytoplasmic side. A helical membrane pass occupies residues 263-283 (WIIVYLGITAICLAISYAVQE). Over 284 to 307 (ARYGGGDWRCTSDPGRYKSSEDGT) the chain is Extracellular. The helical transmembrane segment at 308–328 (CILGGFFFQIGGLGTILFLSL) threads the bilayer. Over 329–343 (YSFDMFLTMNMMTNK) the chain is Cytoplasmic. Residues 344-364 (YFIQTSVGMWALIIFYALLPI) traverse the membrane as a helical segment. The Extracellular segment spans residues 365 to 387 (KHYESSIASAGCWLSNEDNMFWQ). The chain crosses the membrane as a helical span at residues 388–408 (YFCFYVPSYVATFFLGVFIIT). The Cytoplasmic segment spans residues 409-435 (SIYKVFKMTVMFKSIKDKRILLLNIRS). A helical transmembrane segment spans residues 436 to 456 (IIFLIAIMFCVSFSTMYPLYV). Over 457–500 (TYNGDDFSKSVEVYVTCLYANIPNGNEVCPQIVFPQFSLRYMNA) the chain is Extracellular. Residues 501–521 (ITMAIIGIVGLIGLGIDPHIL) form a helical membrane-spanning segment. The Cytoplasmic segment spans residues 522–695 (QIYRESIRFK…NIERINSDNV (174 aa)). Polar residues predominate over residues 545-556 (SPQPLKQGSTTD). Residues 545-695 (SPQPLKQGST…NIERINSDNV (151 aa)) form a disordered region. Residues 593-608 (NLSASSESSNNLLNQS) are compositionally biased toward low complexity. Residues 609-625 (TPGNLNINESISSIDTS) show a composition bias toward polar residues. Residues 626–686 (NNNNNNNNNN…NNNNNNNNNN (61 aa)) show a composition bias toward low complexity. Residues 653–691 (NNNNNNNNNNNNNNNNNNNNYSNNNNNNNNNNNNIERIN) adopt a coiled-coil conformation.

This sequence belongs to the G-protein coupled receptor Fz/Smo family.

Its subcellular location is the membrane. The protein is Frizzled and smoothened-like protein O (fslO) of Dictyostelium discoideum (Social amoeba).